Reading from the N-terminus, the 152-residue chain is SsrA-binding protein (152 aa).

Residues 122–152 form a disordered region; sequence KGKKNHDKRETEAARDWQRDKARLMKGDRGD. The segment covering 128–152 has biased composition (basic and acidic residues); the sequence is DKRETEAARDWQRDKARLMKGDRGD.

Belongs to the SmpB family.

It is found in the cytoplasm. Its function is as follows. Required for rescue of stalled ribosomes mediated by trans-translation. Binds to transfer-messenger RNA (tmRNA), required for stable association of tmRNA with ribosomes. tmRNA and SmpB together mimic tRNA shape, replacing the anticodon stem-loop with SmpB. tmRNA is encoded by the ssrA gene; the 2 termini fold to resemble tRNA(Ala) and it encodes a 'tag peptide', a short internal open reading frame. During trans-translation Ala-aminoacylated tmRNA acts like a tRNA, entering the A-site of stalled ribosomes, displacing the stalled mRNA. The ribosome then switches to translate the ORF on the tmRNA; the nascent peptide is terminated with the 'tag peptide' encoded by the tmRNA and targeted for degradation. The ribosome is freed to recommence translation, which seems to be the essential function of trans-translation. The protein is SsrA-binding protein of Caulobacter sp. (strain K31).